A 201-amino-acid chain; its full sequence is Acyl-homoserine-lactone synthase (201 aa).

It belongs to the autoinducer synthase family.

It catalyses the reaction a fatty acyl-[ACP] + S-adenosyl-L-methionine = an N-acyl-L-homoserine lactone + S-methyl-5'-thioadenosine + holo-[ACP] + H(+). Required for the synthesis of PAI consisting of 3-oxo-N-(tetrahydro-2-oxo-3-furanyl)-dodecanamide also known as N-(3-oxododecanoyl)homoserine lactone, an autoinducer molecule which binds to LasR and thus acts in elastase biosynthesis regulation. This is Acyl-homoserine-lactone synthase (lasI) from Pseudomonas aeruginosa (strain ATCC 15692 / DSM 22644 / CIP 104116 / JCM 14847 / LMG 12228 / 1C / PRS 101 / PAO1).